We begin with the raw amino-acid sequence, 383 residues long: Pentatricopeptide repeat-containing protein 2, mitochondrial (383 aa).

Residues 161 to 195 form a PPR repeat; the sequence is TSFNILMDMLFIKGKYKSALEVLIEMKNQNVKFTT. Residue Ser377 is modified to Phosphoserine.

This sequence belongs to the PTCD2 family.

It is found in the mitochondrion. Its function is as follows. Involved in mitochondrial RNA maturation and mitochondrial respiratory chain function. The sequence is that of Pentatricopeptide repeat-containing protein 2, mitochondrial (PTCD2) from Pongo abelii (Sumatran orangutan).